A 71-amino-acid chain; its full sequence is Gas vesicle protein A (71 aa).

The tract at residues L12–K22 is alpha helix 1. The interval G23–V32 is beta-strand 1. The beta turn stretch occupies residues S33–G36. The interval I37–I46 is beta-strand 2. The alpha helix 2 stretch occupies residues V47–P70.

The protein belongs to the gas vesicle GvpA family. As to quaternary structure, the gas vesicle shell is 2 nm thick and consists of a single layer of this protein. It forms helical ribs nearly perpendicular to the long axis of the vesicle.

It localises to the gas vesicle shell. In terms of biological role, gas vesicles (GV) are hollow, gas filled proteinaceous nanostructures found in some microorganisms. During planktonic growth they allow positioning of the organism at a favorable depth for light or nutrient acquisition. GVs are highly permeable to gas. GvpA forms the protein shell. The ratio of GvpA:GvpC is estimated to be 33:1 and more recently 25:1. The chain is Gas vesicle protein A from Dolichospermum flosaquae (Anabaena flos-aquae).